A 234-amino-acid polypeptide reads, in one-letter code: Ribosomal RNA small subunit methyltransferase G (234 aa).

S-adenosyl-L-methionine is bound by residues G85, F90, and R155.

This sequence belongs to the methyltransferase superfamily. RNA methyltransferase RsmG family.

The protein localises to the cytoplasm. The enzyme catalyses guanosine(527) in 16S rRNA + S-adenosyl-L-methionine = N(7)-methylguanosine(527) in 16S rRNA + S-adenosyl-L-homocysteine. Its function is as follows. Specifically methylates the N7 position of guanine in position 527 of 16S rRNA. This is Ribosomal RNA small subunit methyltransferase G from Rhodopseudomonas palustris (strain BisB18).